The following is a 168-amino-acid chain: Pheromone-binding protein (168 aa).

An N-terminal signal peptide occupies residues 1-26 (MNKTTTKMKVAVVAIVVYLAVGNVDS). 3 disulfides stabilise this stretch: Cys-45/Cys-80, Cys-76/Cys-134, and Cys-123/Cys-143.

The protein belongs to the PBP/GOBP family. In terms of assembly, homodimer. As to expression, antenna.

This major soluble protein in olfactory sensilla of male moths might serve to solubilize the extremely hydrophobic pheromone molecules and to transport pheromone through the aqueous lymph to receptors located on olfactory cilia. PBP is also found in sensilla from female M.sexta antennae. This is Pheromone-binding protein from Manduca sexta (Tobacco hawkmoth).